The sequence spans 276 residues: Bis(5'-nucleosyl)-tetraphosphatase, symmetrical (276 aa).

This sequence belongs to the Ap4A hydrolase family.

The enzyme catalyses P(1),P(4)-bis(5'-adenosyl) tetraphosphate + H2O = 2 ADP + 2 H(+). Functionally, hydrolyzes diadenosine 5',5'''-P1,P4-tetraphosphate to yield ADP. The protein is Bis(5'-nucleosyl)-tetraphosphatase, symmetrical of Tolumonas auensis (strain DSM 9187 / NBRC 110442 / TA 4).